The following is an 880-amino-acid chain: Tyrosine-protein kinase receptor TYRO3 (880 aa).

A signal peptide spans 1 to 30; sequence MALRRSMGRPGLRPLLLAGLASLLLPGSAA. 2 Ig-like C2-type domains span residues 31-118 and 129-210; these read AGLK…TKIS and PFFT…AIIR. Over 31 to 419 the chain is Extracellular; sequence AGLKLMGAPV…QGPPHSRTSW (389 aa). Asparagine 53, asparagine 75, asparagine 181, asparagine 220, asparagine 230, asparagine 283, asparagine 356, and asparagine 370 each carry an N-linked (GlcNAc...) asparagine glycan. Intrachain disulfides connect cysteine 54–cysteine 107 and cysteine 150–cysteine 193. Fibronectin type-III domains lie at 217–310 and 315–406; these read APFN…TKGL and APQN…SHDH. The helical transmembrane segment at 420-440 threads the bilayer; it reads VPVVLGVLTALITAAALALIL. Topologically, residues 441-880 are cytoplasmic; that stretch reads LRKRRKETRF…QQGLLPHSSC (440 aa). Serine 456 carries the phosphoserine modification. The region spanning 508–785 is the Protein kinase domain; the sequence is FTLGRMLGKG…LENILGHLSV (278 aa). Residues 514–522 and lysine 540 contribute to the ATP site; that span reads LGKGEFGSV. Aspartate 645 acts as the Proton acceptor in catalysis. Phosphotyrosine; by autocatalysis is present on residues tyrosine 671, tyrosine 675, tyrosine 676, and tyrosine 794. Disordered regions lie at residues 804–827 and 842–864; these read AENGSPELPCGEQSSSEAGDGSGM and SPGGLAESPGQLEQQPESPLNEN. 2 positions are modified to phosphoserine: serine 808 and serine 859. Positions 852–864 are enriched in polar residues; sequence QLEQQPESPLNEN.

The protein belongs to the protein kinase superfamily. Tyr protein kinase family. AXL/UFO subfamily. Monomer and homodimer. Interacts (via N-terminus) with extracellular ligands TULP1 and GAS6. Interacts with PIK3R1; this interaction increases PI3-kinase activity. Autophosphorylated. Abundant in the brain and lower levels in other tissues.

The protein resides in the cell membrane. The catalysed reaction is L-tyrosyl-[protein] + ATP = O-phospho-L-tyrosyl-[protein] + ADP + H(+). In terms of biological role, receptor tyrosine kinase that transduces signals from the extracellular matrix into the cytoplasm by binding to several ligands including TULP1 or GAS6. Regulates many physiological processes including cell survival, migration and differentiation. Ligand binding at the cell surface induces dimerization and autophosphorylation of TYRO3 on its intracellular domain that provides docking sites for downstream signaling molecules. Following activation by ligand, interacts with PIK3R1 and thereby enhances PI3-kinase activity. Activates the AKT survival pathway, including nuclear translocation of NF-kappa-B and up-regulation of transcription of NF-kappa-B-regulated genes. TYRO3 signaling plays a role in various processes such as neuron protection from excitotoxic injury, platelet aggregation and cytoskeleton reorganization. Also plays an important role in inhibition of Toll-like receptors (TLRs)-mediated innate immune response by activating STAT1, which selectively induces production of suppressors of cytokine signaling SOCS1 and SOCS3. This is Tyrosine-protein kinase receptor TYRO3 (Tyro3) from Rattus norvegicus (Rat).